A 127-amino-acid polypeptide reads, in one-letter code: HTH-type transcriptional regulator ImmR (127 aa).

Positions 1–12 (MSLGKRLKEARQ) are enriched in basic and acidic residues. The tract at residues 1–22 (MSLGKRLKEARQKAGYTQKEAA) is disordered. The region spanning 7-61 (LKEARQKAGYTQKEAAEKLNIGNNNLSNYERDYRDPDTDTLLKLSNLYNVSTDYL) is the HTH cro/C1-type domain. The segment at residues 18-37 (QKEAAEKLNIGNNNLSNYER) is a DNA-binding region (H-T-H motif).

This Bacillus subtilis (strain 168) protein is HTH-type transcriptional regulator ImmR (immR).